Reading from the N-terminus, the 403-residue chain is Chromatin structure-remodeling complex subunit rsc58 (403 aa).

The span at 376 to 389 (SLSMNGSLSPSSTN) shows a compositional bias: low complexity. Positions 376 to 403 (SLSMNGSLSPSSTNVPLQSYRRTTKSRR) are disordered. Ser-384 carries the post-translational modification Phosphoserine.

In terms of assembly, component of the RSC complex composed of at least arp9, arp42, rsc1, rsc4, rsc7, rsc9, rsc58, sfh1, snf21, ssr1, ssr2, ssr3 and ssr4. The complex interacts with histone and histone variant components of centromeric chromatin.

It is found in the cytoplasm. Its subcellular location is the nucleus. Component of the chromatin structure remodeling complex (RSC), which is involved in transcription regulation and nucleosome positioning. Controls particularly membrane and organelle development genes. The chain is Chromatin structure-remodeling complex subunit rsc58 (rsc58) from Schizosaccharomyces pombe (strain 972 / ATCC 24843) (Fission yeast).